We begin with the raw amino-acid sequence, 134 residues long: Flagellar basal-body rod protein FlgC (134 aa).

Belongs to the flagella basal body rod proteins family. As to quaternary structure, the basal body constitutes a major portion of the flagellar organelle and consists of four rings (L,P,S, and M) mounted on a central rod. The rod consists of about 26 subunits of FlgG in the distal portion, and FlgB, FlgC and FlgF are thought to build up the proximal portion of the rod with about 6 subunits each.

Its subcellular location is the bacterial flagellum basal body. The chain is Flagellar basal-body rod protein FlgC (flgC) from Salmonella typhi.